Consider the following 928-residue polypeptide: Eukaryotic translation initiation factor 3 subunit C (928 aa).

Disordered regions lie at residues 1 to 37 (MSRF…SDDE) and 157 to 286 (FREA…EDGE). Positions 11–20 (SESESSEEEV) are enriched in acidic residues. Residues 22 to 33 (TQFNNKAQNFQF) are compositionally biased toward polar residues. 4 positions are modified to phosphoserine: Ser-34, Ser-165, Ser-177, and Ser-186. The segment covering 162-171 (DQESDVDEGE) has biased composition (acidic residues). Residues 172 to 184 (GDVHDSDADRAGD) are compositionally biased toward basic and acidic residues. The span at 215 to 240 (DDDDSEDSIDWDPDTESETESSEDEN) shows a compositional bias: acidic residues. Residues 245-264 (MRERFLKRTTEKEDKDDDKR) show a composition bias toward basic and acidic residues. Residues 265–277 (KDKRKEQKHKVRK) are compositionally biased toward basic residues. The 177-residue stretch at 656–832 (FHMHINLELL…ETVVMHRSEP (177 aa)) folds into the PCI domain. Positions 864-928 (FFQRGNMGNR…QQQVHTIDEE (65 aa)) are disordered. Residues 898 to 909 (QRNRNQRGHHKQ) are compositionally biased toward basic residues. The segment covering 910 to 921 (NQQQNQQQQQQQ) has biased composition (low complexity).

It belongs to the eIF-3 subunit C family. As to quaternary structure, component of the eukaryotic translation initiation factor 3 (eIF-3) complex. The eIF-3 complex interacts with pix.

The protein localises to the cytoplasm. Its function is as follows. Component of the eukaryotic translation initiation factor 3 (eIF-3) complex, which is involved in protein synthesis of a specialized repertoire of mRNAs and, together with other initiation factors, stimulates binding of mRNA and methionyl-tRNAi to the 40S ribosome. The eIF-3 complex specifically targets and initiates translation of a subset of mRNAs involved in cell proliferation. In Drosophila grimshawi (Hawaiian fruit fly), this protein is Eukaryotic translation initiation factor 3 subunit C.